A 90-amino-acid chain; its full sequence is UPF0237 protein PAE3582 (90 aa).

The ACT domain occupies 5-74 (VVSVLGADRV…LEEEGKRLGV (70 aa)).

The protein belongs to the UPF0237 family.

This chain is UPF0237 protein PAE3582, found in Pyrobaculum aerophilum (strain ATCC 51768 / DSM 7523 / JCM 9630 / CIP 104966 / NBRC 100827 / IM2).